Reading from the N-terminus, the 662-residue chain is Acetyl-coenzyme A synthetase (662 aa).

CoA contacts are provided by residues 197 to 200 (RKGK) and threonine 317. Residues 393-395 (GEP), 417-422 (DTWWQT), aspartate 510, and arginine 525 contribute to the ATP site. Serine 533 is a binding site for CoA. ATP is bound at residue arginine 536. Mg(2+)-binding residues include histidine 549 and valine 552. Lysine 623 is subject to N6-acetyllysine.

The protein belongs to the ATP-dependent AMP-binding enzyme family. It depends on Mg(2+) as a cofactor. Acetylated. Deacetylation by the SIR2-homolog deacetylase activates the enzyme.

It catalyses the reaction acetate + ATP + CoA = acetyl-CoA + AMP + diphosphate. Catalyzes the conversion of acetate into acetyl-CoA (AcCoA), an essential intermediate at the junction of anabolic and catabolic pathways. AcsA undergoes a two-step reaction. In the first half reaction, AcsA combines acetate with ATP to form acetyl-adenylate (AcAMP) intermediate. In the second half reaction, it can then transfer the acetyl group from AcAMP to the sulfhydryl group of CoA, forming the product AcCoA. In Helicobacter pylori (strain G27), this protein is Acetyl-coenzyme A synthetase.